Consider the following 436-residue polypeptide: Fasciclin-like arabinogalactan protein 15 (436 aa).

Residues 1–20 (MDDLSKLLFFLLLTISITTA) form the signal peptide. 2 FAS1 domains span residues 31–165 (NSNS…ERLL) and 249–392 (VKDF…DGVL). Residues N68 and N271 are each glycosylated (N-linked (GlcNAc...) asparagine).

The protein belongs to the fasciclin-like AGP family.

The protein localises to the secreted. May be a cell surface adhesion protein. The sequence is that of Fasciclin-like arabinogalactan protein 15 (FLA15) from Arabidopsis thaliana (Mouse-ear cress).